The sequence spans 601 residues: Glutamyl-tRNA(Gln) amidotransferase subunit B, mitochondrial (601 aa).

Residues 1–52 constitute a mitochondrion transit peptide; sequence MLQQWLRQSPGAARFLRGSCCRGPQSGSLRHSPLPTAPHRCIRSLQTSATES.

This sequence belongs to the GatB/GatE family. GatB subfamily. As to quaternary structure, subunit of the heterotrimeric GatCAB amidotransferase (AdT) complex, composed of A, B and C subunits.

The protein resides in the mitochondrion. It carries out the reaction L-glutamyl-tRNA(Gln) + L-glutamine + ATP + H2O = L-glutaminyl-tRNA(Gln) + L-glutamate + ADP + phosphate + H(+). In terms of biological role, allows the formation of correctly charged Gln-tRNA(Gln) through the transamidation of misacylated Glu-tRNA(Gln) in the mitochondria. The reaction takes place in the presence of glutamine and ATP through an activated gamma-phospho-Glu-tRNA(Gln). This Neosartorya fischeri (strain ATCC 1020 / DSM 3700 / CBS 544.65 / FGSC A1164 / JCM 1740 / NRRL 181 / WB 181) (Aspergillus fischerianus) protein is Glutamyl-tRNA(Gln) amidotransferase subunit B, mitochondrial.